We begin with the raw amino-acid sequence, 287 residues long: MLDEGYESRIIDGKVLAKKIEDEVRSGVEALVSGRGITPGLATVLVGDDPASKMYVRLKHRACERVGIQAEDHFLPAETSQEELISLINTLNKDQNVHGILLQLPLPKHLFPQEAMEAIAPEKDADGFHPYNMGKLMIGDEGLVPCTPHGVIRALEEYNVPVKGKNVVIVGHSNVVGKPLAAMFLNRNATVSVCHVFTDDLKKYTLDADILVVATGVKHLIKADMVKEGAVIFDVGITKEKDGVYGDVDFENVIKKAALITPVPGGVGPLTVAMLMKHVLGCAETNY.

NADP(+)-binding positions include 171-173 (GHS) and Ile-237.

The protein belongs to the tetrahydrofolate dehydrogenase/cyclohydrolase family. Homodimer.

The catalysed reaction is (6R)-5,10-methylene-5,6,7,8-tetrahydrofolate + NADP(+) = (6R)-5,10-methenyltetrahydrofolate + NADPH. The enzyme catalyses (6R)-5,10-methenyltetrahydrofolate + H2O = (6R)-10-formyltetrahydrofolate + H(+). Its pathway is one-carbon metabolism; tetrahydrofolate interconversion. Its function is as follows. Catalyzes the oxidation of 5,10-methylenetetrahydrofolate to 5,10-methenyltetrahydrofolate and then the hydrolysis of 5,10-methenyltetrahydrofolate to 10-formyltetrahydrofolate. The protein is Bifunctional protein FolD of Methanosarcina barkeri (strain Fusaro / DSM 804).